A 107-amino-acid chain; its full sequence is UPF0122 protein EAT1b_2891 (107 aa).

This sequence belongs to the UPF0122 family.

In terms of biological role, might take part in the signal recognition particle (SRP) pathway. This is inferred from the conservation of its genetic proximity to ftsY/ffh. May be a regulatory protein. This Exiguobacterium sp. (strain ATCC BAA-1283 / AT1b) protein is UPF0122 protein EAT1b_2891.